The chain runs to 359 residues: Probable dual-specificity RNA methyltransferase RlmN (359 aa).

The Proton acceptor role is filled by glutamate 100. The Radical SAM core domain occupies 106 to 340; the sequence is TDKRLTVCVS…VSVRASRGRD (235 aa). Residues cysteine 113 and cysteine 345 are joined by a disulfide bond. 3 residues coordinate [4Fe-4S] cluster: cysteine 120, cysteine 124, and cysteine 127. S-adenosyl-L-methionine contacts are provided by residues 167 to 168, serine 197, 226 to 228, and asparagine 302; these read GE and SLH. Catalysis depends on cysteine 345, which acts as the S-methylcysteine intermediate.

This sequence belongs to the radical SAM superfamily. RlmN family. [4Fe-4S] cluster is required as a cofactor.

Its subcellular location is the cytoplasm. The enzyme catalyses adenosine(2503) in 23S rRNA + 2 reduced [2Fe-2S]-[ferredoxin] + 2 S-adenosyl-L-methionine = 2-methyladenosine(2503) in 23S rRNA + 5'-deoxyadenosine + L-methionine + 2 oxidized [2Fe-2S]-[ferredoxin] + S-adenosyl-L-homocysteine. It catalyses the reaction adenosine(37) in tRNA + 2 reduced [2Fe-2S]-[ferredoxin] + 2 S-adenosyl-L-methionine = 2-methyladenosine(37) in tRNA + 5'-deoxyadenosine + L-methionine + 2 oxidized [2Fe-2S]-[ferredoxin] + S-adenosyl-L-homocysteine. In terms of biological role, specifically methylates position 2 of adenine 2503 in 23S rRNA and position 2 of adenine 37 in tRNAs. In Prochlorococcus marinus (strain NATL2A), this protein is Probable dual-specificity RNA methyltransferase RlmN.